A 549-amino-acid chain; its full sequence is MKRVLTALAAALPFAAHAADAISGAVERQPTNWQAIIMFLIFVVFTLGITYWASKRVRSRSDYYTAGGNITGFQNGLAIAGDYMSAASFLGISALVFTSGYDGLIYSLGFLVGWPIILFLIAERLRNLGRYTFADVASYRLKQGPIRILSACGSLVVVALYLIAQMVGAGKLIELLFGLNYHIAVVLVGVLMMMYVLFGGMLATTWVQIIKAVLLLFGASFMAFMVMKHVGFSFNNLFTEAMAVHPKGTAIMSPGGLVQDPISALSLGLGLMFGTAGLPHILMRFFTVSDAREARKSVFYATGFMGYFYILTFIIGFGAIMLVGANPAYKDAAGALIGGNNMAAVHLANAVGGNLFLGFISAVAFATILAVVAGLTLAGASAVSHDLYANVFRKGATEREELKVSKITVLVLGVIAIILGILFENQNIAFMVGLAFAIAASCNFPIILLSMYWSKLTTRGAMLGGWLGLLTAVVLMILGPTIWVQILGHEKAIFPYEYPALFSISVAFLGIWFFSATDNSAEGNREREQFRAQFIRSQTGFGVQQGRAH.

The next 13 membrane-spanning stretches (helical) occupy residues 33–53 (WQAIIMFLIFVVFTLGITYWA), 77–97 (LAIAGDYMSAASFLGISALVF), 103–123 (GLIYSLGFLVGWPIILFLIAE), 148–168 (ILSACGSLVVVALYLIAQMVG), 183–203 (IAVVLVGVLMMMYVLFGGMLA), 206–226 (WVQIIKAVLLLFGASFMAFMV), 262–282 (ISALSLGLGLMFGTAGLPHIL), 303–323 (GFMGYFYILTFIIGFGAIMLV), 355–375 (LFLGFISAVAFATILAVVAGL), 404–424 (VSKITVLVLGVIAIILGILFE), 428–448 (IAFMVGLAFAIAASCNFPIIL), 464–484 (GGWLGLLTAVVLMILGPTIWV), and 493–513 (IFPYEYPALFSISVAFLGIWF).

Belongs to the sodium:solute symporter (SSF) (TC 2.A.21) family.

It localises to the cell inner membrane. Transports acetate. The polypeptide is Cation/acetate symporter ActP (Salmonella newport (strain SL254)).